Consider the following 692-residue polypeptide: Elongation factor G (692 aa).

The tr-type G domain occupies 8-282; it reads KDTRNIGIMA…AVLDYLPSPL (275 aa). GTP contacts are provided by residues 17 to 24, 81 to 85, and 135 to 138; these read AHIDAGKT, DTPGH, and NKMD.

It belongs to the TRAFAC class translation factor GTPase superfamily. Classic translation factor GTPase family. EF-G/EF-2 subfamily.

Its subcellular location is the cytoplasm. Functionally, catalyzes the GTP-dependent ribosomal translocation step during translation elongation. During this step, the ribosome changes from the pre-translocational (PRE) to the post-translocational (POST) state as the newly formed A-site-bound peptidyl-tRNA and P-site-bound deacylated tRNA move to the P and E sites, respectively. Catalyzes the coordinated movement of the two tRNA molecules, the mRNA and conformational changes in the ribosome. The sequence is that of Elongation factor G from Shouchella clausii (strain KSM-K16) (Alkalihalobacillus clausii).